A 180-amino-acid polypeptide reads, in one-letter code: Type-1 fimbrial protein, C chain (180 aa).

Residues 1–23 (MKLKFISMAVFSALTLGVATNAS) form the signal peptide. An intrachain disulfide couples Cys-44 to Cys-84.

The protein belongs to the fimbrial protein family.

Its subcellular location is the fimbrium. Its function is as follows. Fimbriae (also called pili), polar filaments radiating from the surface of the bacterium to a length of 0.5-1.5 micrometers and numbering 100-300 per cell, enable bacteria to colonize the epithelium of specific host organs. This is Type-1 fimbrial protein, C chain (pilC) from Escherichia coli O6:H1 (strain CFT073 / ATCC 700928 / UPEC).